The sequence spans 512 residues: Putative ankyrin repeat protein FPV233 (512 aa).

ANK repeat units lie at residues 45-73 (IPFI…NVNQ), 77-106 (DDTY…QCSV), 136-168 (IQDI…DINM), 172-201 (HGNS…NPNI), 205-236 (TNKS…NTDP), 238-262 (LSHA…SINA), 266-296 (YGNT…DVNA), and 301-329 (RNLT…DINS).

The chain is Putative ankyrin repeat protein FPV233 from Vertebrata (FPV).